Here is a 101-residue protein sequence, read N- to C-terminus: Small ribosomal subunit protein uS14 (101 aa).

This sequence belongs to the universal ribosomal protein uS14 family. In terms of assembly, part of the 30S ribosomal subunit. Contacts proteins S3 and S10.

Binds 16S rRNA, required for the assembly of 30S particles and may also be responsible for determining the conformation of the 16S rRNA at the A site. This chain is Small ribosomal subunit protein uS14, found in Alkalilimnicola ehrlichii (strain ATCC BAA-1101 / DSM 17681 / MLHE-1).